Consider the following 343-residue polypeptide: 3-dehydroquinate synthase (343 aa).

Residues 61-66 (SGEKYK), 95-99 (GVISD), 119-120 (TT), Lys-132, Lys-141, and 159-162 (FLKT) contribute to the NAD(+) site. Positions 174, 231, and 248 each coordinate Zn(2+).

This sequence belongs to the sugar phosphate cyclases superfamily. Dehydroquinate synthase family. Co(2+) is required as a cofactor. It depends on Zn(2+) as a cofactor. The cofactor is NAD(+).

The protein resides in the cytoplasm. The catalysed reaction is 7-phospho-2-dehydro-3-deoxy-D-arabino-heptonate = 3-dehydroquinate + phosphate. It functions in the pathway metabolic intermediate biosynthesis; chorismate biosynthesis; chorismate from D-erythrose 4-phosphate and phosphoenolpyruvate: step 2/7. In terms of biological role, catalyzes the conversion of 3-deoxy-D-arabino-heptulosonate 7-phosphate (DAHP) to dehydroquinate (DHQ). The sequence is that of 3-dehydroquinate synthase from Helicobacter pylori (strain G27).